Here is a 211-residue protein sequence, read N- to C-terminus: Probable nicotinate-nucleotide adenylyltransferase (211 aa).

The protein belongs to the NadD family.

The enzyme catalyses nicotinate beta-D-ribonucleotide + ATP + H(+) = deamido-NAD(+) + diphosphate. Its pathway is cofactor biosynthesis; NAD(+) biosynthesis; deamido-NAD(+) from nicotinate D-ribonucleotide: step 1/1. Catalyzes the reversible adenylation of nicotinate mononucleotide (NaMN) to nicotinic acid adenine dinucleotide (NaAD). The sequence is that of Probable nicotinate-nucleotide adenylyltransferase from Wigglesworthia glossinidia brevipalpis.